A 269-amino-acid chain; its full sequence is Chymotrypsin-like elastase family member 2A (269 aa).

Residues 1–16 (MIRALLLSTLVAGALS) form the signal peptide. Residues 17-28 (CGLPANLPQLPR) constitute a propeptide, activation peptide. Residues 29–267 (VVGGEDARPN…YIDWINSVIA (239 aa)) enclose the Peptidase S1 domain. An intrachain disulfide couples cysteine 58 to cysteine 74. Residues histidine 73 and aspartate 121 each act as charge relay system in the active site. 3 disulfide bridges follow: cysteine 155-cysteine 222, cysteine 186-cysteine 202, and cysteine 212-cysteine 243. Serine 216 serves as the catalytic Charge relay system.

Belongs to the peptidase S1 family. Elastase subfamily. Interacts with CPA1. Interacts with SERPINA1. As to expression, pancreas.

It is found in the secreted. It catalyses the reaction Preferential cleavage: Leu-|-Xaa, Met-|-Xaa and Phe-|-Xaa. Hydrolyzes elastin.. Elastase that enhances insulin signaling and might have a physiologic role in cellular glucose metabolism. Circulates in plasma and reduces platelet hyperactivation, triggers both insulin secretion and degradation, and increases insulin sensitivity. The protein is Chymotrypsin-like elastase family member 2A (CELA2A) of Sus scrofa (Pig).